The following is an 893-amino-acid chain: DNA mismatch repair protein MutS (893 aa).

ATP is bound at residue 637–644 (GPNMGGKS).

Belongs to the DNA mismatch repair MutS family.

Functionally, this protein is involved in the repair of mismatches in DNA. It is possible that it carries out the mismatch recognition step. This protein has a weak ATPase activity. This chain is DNA mismatch repair protein MutS, found in Burkholderia thailandensis (strain ATCC 700388 / DSM 13276 / CCUG 48851 / CIP 106301 / E264).